A 367-amino-acid chain; its full sequence is Quinolinate synthase (367 aa).

Iminosuccinate is bound by residues H45 and S62. Position 109 (C109) interacts with [4Fe-4S] cluster. Iminosuccinate is bound by residues 140–142 (YVN) and S161. Position 229 (C229) interacts with [4Fe-4S] cluster. Residues 255–257 (HPE) and T272 contribute to the iminosuccinate site. C319 is a binding site for [4Fe-4S] cluster.

The protein belongs to the quinolinate synthase family. Type 3 subfamily. [4Fe-4S] cluster serves as cofactor.

It localises to the cytoplasm. It catalyses the reaction iminosuccinate + dihydroxyacetone phosphate = quinolinate + phosphate + 2 H2O + H(+). It participates in cofactor biosynthesis; NAD(+) biosynthesis; quinolinate from iminoaspartate: step 1/1. Catalyzes the condensation of iminoaspartate with dihydroxyacetone phosphate to form quinolinate. This is Quinolinate synthase from Geobacillus thermodenitrificans (strain NG80-2).